Here is a 423-residue protein sequence, read N- to C-terminus: Protein CLP1 homolog (423 aa).

ATP-binding positions include Glu16, Lys57, and 119-124; that span reads DVGKST.

Belongs to the Clp1 family. Clp1 subfamily.

It is found in the nucleus. Required for endonucleolytic cleavage during polyadenylation-dependent pre-mRNA 3'-end formation. The sequence is that of Protein CLP1 homolog (cbc) from Drosophila simulans (Fruit fly).